A 1444-amino-acid chain; its full sequence is Probable serine/threonine-protein kinase irlC (1444 aa).

Residues Thr335 to Lys370 form a disordered region. The segment covering Asn338 to Asn368 has biased composition (low complexity). Residues Phe495–Tyr529 form an SWIM-type zinc finger. The segment covering Thr584 to Glu613 has biased composition (low complexity). Disordered stretches follow at residues Thr584–Lys619 and Gln864–Ile938. 2 coiled-coil regions span residues Asn593–Glu620 and Ile847–Ile879. Residues Gln864–Lys876 are compositionally biased toward basic residues. Residues Ser885–Pro937 show a composition bias toward low complexity. The region spanning Arg981–Phe1246 is the Protein kinase domain. ATP is bound by residues Leu987–Leu995 and Lys1010. Residue Asp1116 is the Proton acceptor of the active site. Residues Asn1279–Lys1444 form the KEN domain.

This sequence belongs to the protein kinase superfamily. Ser/Thr protein kinase family.

It catalyses the reaction L-seryl-[protein] + ATP = O-phospho-L-seryl-[protein] + ADP + H(+). The enzyme catalyses L-threonyl-[protein] + ATP = O-phospho-L-threonyl-[protein] + ADP + H(+). The protein is Probable serine/threonine-protein kinase irlC (irlC) of Dictyostelium discoideum (Social amoeba).